The following is a 257-amino-acid chain: Gasdermin-like protein rcd-1-1 (257 aa).

This sequence belongs to the gasdermin family. In terms of assembly, heterooligomer; the heterooligomer with rcd-1-2 forms a ring-shaped pore complex when inserted in the membrane.

It localises to the cytoplasm. The protein localises to the cell membrane. Functionally, gasdermin-like protein involved in heterokaryon incompatibility, a process that ensures that during spontaneous vegetative cell fusion, only compatible cells from the same colony survive (non-self-recognition). In N.crassa, the rcd-1 locus exists as 2 incompatible alleles, rcd-1-1 (this entry) and rcd-1-2 (AC P0DW10). During the allorecognition process, forms a heterooligomer with rcd-1-2, thereby forming a functional gasdermin-like complex that binds to membranes and forms pores, triggering cell death. Binds negatively charged phospholipids, such as cardiolipin and phosphatidylserine. Also binds to phosphoinositides, preferentially to phosphatidylinositol-3-phosphate (PtdIns-3-P), PtdIns-5-P and PtdIns-3,5-P2. The protein is Gasdermin-like protein rcd-1-1 of Neurospora crassa (strain ATCC 24698 / 74-OR23-1A / CBS 708.71 / DSM 1257 / FGSC 987).